A 440-amino-acid chain; its full sequence is Chromosome partition protein MukF (440 aa).

The tract at residues 208–236 is leucine-zipper; it reads LSETSGTLRELQDTLEAAGDKLQANLLRI.

Belongs to the MukF family. As to quaternary structure, interacts, and probably forms a ternary complex, with MukE and MukB via its C-terminal region. The complex formation is stimulated by calcium or magnesium. It is required for an interaction between MukE and MukB.

The protein localises to the cytoplasm. Its subcellular location is the nucleoid. In terms of biological role, involved in chromosome condensation, segregation and cell cycle progression. May participate in facilitating chromosome segregation by condensation DNA from both sides of a centrally located replisome during cell division. Not required for mini-F plasmid partitioning. Probably acts via its interaction with MukB and MukE. Overexpression results in anucleate cells. It has a calcium binding activity. The chain is Chromosome partition protein MukF from Photorhabdus laumondii subsp. laumondii (strain DSM 15139 / CIP 105565 / TT01) (Photorhabdus luminescens subsp. laumondii).